The primary structure comprises 108 residues: Glutaredoxin-1 (108 aa).

In terms of domain architecture, Glutaredoxin spans 3–106 (EEFVQQRLAN…DILSSIGVLR (104 aa)). Cys23 and Cys26 are oxidised to a cystine.

This sequence belongs to the glutaredoxin family.

The protein localises to the virion. In terms of biological role, displays thioltransferase and dehydroascorbate reductase activities. The sequence is that of Glutaredoxin-1 (OPG075) from Vaccinia virus (strain Copenhagen) (VACV).